Reading from the N-terminus, the 268-residue chain is Dioscorin DB3S (268 aa).

Positions 25–259 (DEFSYIEGNP…TNFRSVFYFE (235 aa)) constitute an Alpha-carbonic anhydrase domain. A disulfide bridge links cysteine 50 with cysteine 209. Histidine 91 acts as the Proton acceptor in catalysis. Residues aspartate 92, 117–119 (HFH), glutamine 136, and 205–206 (TA) contribute to the L-ascorbate site.

The protein belongs to the alpha-class carbonic anhydrase family. Monomer. Homodimer. Not glycosylated. Expressed in tuber (at protein level).

The catalysed reaction is hydrogencarbonate + H(+) = CO2 + H2O. It carries out the reaction 2 monodehydro-L-ascorbate radical + NADH + H(+) = 2 L-ascorbate + NAD(+). Functionally, storage protein of tuber. Involved in protection against oxidative stress. Has carbonate dehydratase and weak trypsin inhibitor activity detected by measuring the dehydration of sodium bicarbonate and the inhibition of trypsin-catalyzed hydrolysis of N-benzoyl-L-arginine-4-nitro anilide, respectively. Contrarily, no carbonate dehydratase or trypsin inhibitor activity detected by measuring the hydrolysis of 4-nitrophenyl acetate or the inhibition of bovine trypsin-catalyzed hydrolysis of N-benzoyl-L-arginine ethyl ester, respectively. Has dehydroascorbate (DHA) reductase and monodehydroascorbate (MDA) reductase activities. Catalyzes the reactions of carbonate dehydratase and DHA reductase independently of zinc and glutathione (GSH). The coupled reaction is capable of recycling a plant antioxidant ascorbate using ubiquitous compounds H(2)O and CO(2). Exhibits antioxidant activity. Able to scavenge 1,1-diphenyl-2-picrylhydrazyl (DPPH) radical and hydroxyl radicals. Exhibits immunomodulatory activity. Activates Toll-like receptor 4 signaling pathways by up-regulating the gene expression of pro-inflammatory cytokines, such as tumor necrosis factor alpha, interleukin-1 beta and interleukin-6, and chemokines RANTES and MCP-1, in mouse RAW 264.7 macrophages. Stimulates the phagocytosis of E.coli by the LPS-treated mouse macrophages. The polypeptide is Dioscorin DB3S (Dioscorea polystachya (Chinese yam)).